The following is a 512-amino-acid chain: MDLKESPSEGSLQPSSIQIFANTSTLHGIRHIFVYGPLTIRRVLWAVAFVGSLGLLLVESSERVSYYFSYQHVTKVDEVVAQSLVFPAVTLCNLNGFRFSRLTTNDLYHAGELLALLDVNLQIPDPHLADPSVLEALRQKANFKHYKPKQFSMLEFLHRVGHDLKDMMLYCKFKGQECGHQDFTTVFTKYGKCYMFNSGEDGKPLLTTVKGGTGNGLEIMLDIQQDEYLPIWGETEETTFEAGVKVQIHSQSEPPFIQELGFGVAPGFQTFVATQEQRLTYLPPPWGECRSSEMGLDFFPVYSITACRIDCETRYIVENCNCRMVHMPGDAPFCTPEQHKECAEPALGLLAEKDSNYCLCRTPCNLTRYNKELSMVKIPSKTSAKYLEKKFNKSEKYISENILVLDIFFEALNYETIEQKKAYEVAALLGDIGGQMGLFIGASILTILELFDYIYELIKEKLLDLLGKEEDEGSHDENVSTCDTMPNHSETISHTVNVPLQTTLGTLEEIAC.

Over 1–42 (MDLKESPSEGSLQPSSIQIFANTSTLHGIRHIFVYGPLTIRR) the chain is Cytoplasmic. Phosphoserine is present on residues S8 and S11. The chain crosses the membrane as a helical span at residues 43 to 64 (VLWAVAFVGSLGLLLVESSERV). The Extracellular segment spans residues 65 to 424 (SYYFSYQHVT…ETIEQKKAYE (360 aa)). 6 disulfides stabilise this stretch: C92-C193, C289-C364, C307-C360, C311-C358, C320-C342, and C322-C334. 2 N-linked (GlcNAc...) asparagine glycosylation sites follow: N365 and N392. Residues 425–439 (VAALLGDIGGQMGLF) traverse the membrane as a helical segment. Over 440 to 512 (IGASILTILE…TLGTLEEIAC (73 aa)) the chain is Cytoplasmic. Positions 441 to 443 (GAS) match the GAS motif; ion selectivity filter motif.

This sequence belongs to the amiloride-sensitive sodium channel (TC 1.A.6) family. ASIC2 subfamily. In terms of assembly, can form homotrimers. Heterotrimer; forms functional heterotrimers producing channel with different properties. Forms heterotrimers with ASIC1; while ASIC1 determines current amplitude, ASIC2 influences the properties of the current. Forms heterotrimers with ASIC3; resulting in channels with distinct properties. Interacts with STOM; STOM regulates the gating of ASIC2-containing channels. Interacts with PICK1; promotes ASIC3 phosphorylation by PKC and activation of ASIC2/ASIC3 heterotrimers. Expressed in brain, cerebellum, trigeminal sensory ganglia and also detected in testis.

Its subcellular location is the cell membrane. The catalysed reaction is Na(+)(in) = Na(+)(out). The enzyme catalyses K(+)(in) = K(+)(out). It catalyses the reaction Li(+)(in) = Li(+)(out). Its activity is regulated as follows. Inhibited by the diuretic drug amiloride. Inhibited by gadolinium ions, the heterotrimer with ASIC3 being more sensitive. Heterotrimer composed of ASIC1 and ASIC2 are inhibited by the snake venom mambalgin-1. Forms pH-gated trimeric sodium channels that act as postsynaptic excitatory sensors in the nervous system. Upon extracellular acidification, these channels generate rapid, transient inward currents that fully desensitize. Highly selective for sodium, they are permeable to other cations. By forming heterotrimeric channels with ASIC1, could contribute to synaptic plasticity, learning, and memory. Additionally, as acid sensors at nerve terminals, plays a role in mechanosensation and phototransduction. This chain is Acid-sensing ion channel 2, found in Homo sapiens (Human).